Here is a 306-residue protein sequence, read N- to C-terminus: MSNEFITFEKISRKSWKQLHQKSKPLLTQEELTSITSLNDNIDINDVVEVYLPLIHLIQVYKIAQENLSFSKSLFLKKDIQQRPFIIGISGSVAVGKSTTSRLLQLLLARTHKTSTVELVTTDGFLYPNSTLIKNNMLNRKGFPESYNMELLLNFLDTVKGGQTASAPVYSHEIYDIVPDQQQTFTNPDFLIIEGINVFQNQQNNRLYMSDYFDFSIYIDADSHHIEQWYLERFLSLLELAKHDPANYYTRYTSLPQNEAIAFAKKVWKTINLENLEKFIEPTRNRAELILHKAADHKIDEIYLKK.

91–98 (GSVAVGKS) serves as a coordination point for ATP.

The protein belongs to the prokaryotic pantothenate kinase family.

It localises to the cytoplasm. The catalysed reaction is (R)-pantothenate + ATP = (R)-4'-phosphopantothenate + ADP + H(+). It functions in the pathway cofactor biosynthesis; coenzyme A biosynthesis; CoA from (R)-pantothenate: step 1/5. The chain is Pantothenate kinase from Streptococcus equi subsp. equi (strain 4047).